The following is an 829-amino-acid chain: Periplasmic nitrate reductase (829 aa).

Residues 1–27 (MNRRDFMKANAVIAAASAAGLALPAGA) constitute a signal peptide (tat-type signal). A 4Fe-4S Mo/W bis-MGD-type domain is found at 39 to 95 (LEWNKAPCRFCGTGCSVMVATREGKVVATHGDANSEVNRGLSCIKGYFLSKIMYGRD). 4 residues coordinate [4Fe-4S] cluster: cysteine 46, cysteine 49, cysteine 53, and cysteine 81. Mo-bis(molybdopterin guanine dinucleotide) contacts are provided by residues lysine 83, glutamine 150, asparagine 175, cysteine 179, 212 to 219 (WGSNMAEM), 243 to 247 (STFEH), 262 to 264 (QTD), methionine 373, glutamine 377, asparagine 483, 509 to 510 (SD), lysine 532, aspartate 559, and 719 to 728 (TGRVLEHWHS). Position 795 (tryptophan 795) interacts with substrate. Mo-bis(molybdopterin guanine dinucleotide) is bound by residues asparagine 803 and lysine 820.

The protein belongs to the prokaryotic molybdopterin-containing oxidoreductase family. NasA/NapA/NarB subfamily. In terms of assembly, component of the periplasmic nitrate reductase NapAB complex composed of NapA and NapB. Requires [4Fe-4S] cluster as cofactor. It depends on Mo-bis(molybdopterin guanine dinucleotide) as a cofactor. In terms of processing, predicted to be exported by the Tat system. The position of the signal peptide cleavage has not been experimentally proven.

The protein localises to the periplasm. The catalysed reaction is 2 Fe(II)-[cytochrome] + nitrate + 2 H(+) = 2 Fe(III)-[cytochrome] + nitrite + H2O. Its function is as follows. Catalytic subunit of the periplasmic nitrate reductase complex NapAB. Receives electrons from NapB and catalyzes the reduction of nitrate to nitrite. The sequence is that of Periplasmic nitrate reductase from Shewanella denitrificans (strain OS217 / ATCC BAA-1090 / DSM 15013).